Here is a 76-residue protein sequence, read N- to C-terminus: uncharacterized protein (76 aa).

This is an uncharacterized protein from Mycobacterium tuberculosis (strain ATCC 25618 / H37Rv).